A 493-amino-acid chain; its full sequence is Probable cytosol aminopeptidase (493 aa).

Lys257 and Asp262 together coordinate Mn(2+). The active site involves Lys269. Mn(2+) is bound by residues Asp281, Asp341, and Glu343. Residue Arg345 is part of the active site.

The protein belongs to the peptidase M17 family. Mn(2+) serves as cofactor.

It is found in the cytoplasm. It carries out the reaction Release of an N-terminal amino acid, Xaa-|-Yaa-, in which Xaa is preferably Leu, but may be other amino acids including Pro although not Arg or Lys, and Yaa may be Pro. Amino acid amides and methyl esters are also readily hydrolyzed, but rates on arylamides are exceedingly low.. The catalysed reaction is Release of an N-terminal amino acid, preferentially leucine, but not glutamic or aspartic acids.. In terms of biological role, presumably involved in the processing and regular turnover of intracellular proteins. Catalyzes the removal of unsubstituted N-terminal amino acids from various peptides. This is Probable cytosol aminopeptidase from Synechococcus sp. (strain WH7803).